A 160-amino-acid polypeptide reads, in one-letter code: MATAYQNLSEYDFNSVPDASEMNIGIVVAEWNKNITEKLLEGACNTLEKHGVKPENIVVKRVPGSFELTFGAKRLAETKELDAVIVLGCVVRGDTPHFDYVCSGVTQGITELNLMYDIPFIFGLLTTDTMQQSEDRAGGRYGNKGDEAAVTAIKMVNFSA.

Residues Trp31, 65-67 (SFE), and 89-91 (CVV) each bind 5-amino-6-(D-ribitylamino)uracil. 94-95 (DT) contributes to the (2S)-2-hydroxy-3-oxobutyl phosphate binding site. Residue His97 is the Proton donor of the active site. Phe122 is a 5-amino-6-(D-ribitylamino)uracil binding site. Arg136 is a binding site for (2S)-2-hydroxy-3-oxobutyl phosphate.

Belongs to the DMRL synthase family.

The catalysed reaction is (2S)-2-hydroxy-3-oxobutyl phosphate + 5-amino-6-(D-ribitylamino)uracil = 6,7-dimethyl-8-(1-D-ribityl)lumazine + phosphate + 2 H2O + H(+). It functions in the pathway cofactor biosynthesis; riboflavin biosynthesis; riboflavin from 2-hydroxy-3-oxobutyl phosphate and 5-amino-6-(D-ribitylamino)uracil: step 1/2. Catalyzes the formation of 6,7-dimethyl-8-ribityllumazine by condensation of 5-amino-6-(D-ribitylamino)uracil with 3,4-dihydroxy-2-butanone 4-phosphate. This is the penultimate step in the biosynthesis of riboflavin. This chain is 6,7-dimethyl-8-ribityllumazine synthase, found in Parabacteroides distasonis (strain ATCC 8503 / DSM 20701 / CIP 104284 / JCM 5825 / NCTC 11152).